Consider the following 513-residue polypeptide: GMP synthase [glutamine-hydrolyzing] (513 aa).

Residues 3–200 (SVLVLDFGSQ…LIDIAGITPD (198 aa)) form the Glutamine amidotransferase type-1 domain. Residue C80 is the Nucleophile of the active site. Catalysis depends on residues H174 and E176. A GMPS ATP-PPase domain is found at 201–388 (WSPKHFIDHQ…LGIAEDILMR (188 aa)). Residue 228–234 (SGGVDSS) coordinates ATP.

As to quaternary structure, homodimer.

It catalyses the reaction XMP + L-glutamine + ATP + H2O = GMP + L-glutamate + AMP + diphosphate + 2 H(+). Its pathway is purine metabolism; GMP biosynthesis; GMP from XMP (L-Gln route): step 1/1. Its function is as follows. Catalyzes the synthesis of GMP from XMP. The chain is GMP synthase [glutamine-hydrolyzing] from Chlorobium limicola (strain DSM 245 / NBRC 103803 / 6330).